A 115-amino-acid polypeptide reads, in one-letter code: NADH-ubiquinone oxidoreductase chain 3 (115 aa).

3 helical membrane passes run 4–24, 55–75, and 87–107; these read LTAL…AFWL, FFLV…LLPL, and MMLT…YEWM.

The protein belongs to the complex I subunit 3 family. Core subunit of respiratory chain NADH dehydrogenase (Complex I) which is composed of 45 different subunits. Interacts with TMEM186. Interacts with TMEM242.

It is found in the mitochondrion inner membrane. It catalyses the reaction a ubiquinone + NADH + 5 H(+)(in) = a ubiquinol + NAD(+) + 4 H(+)(out). Its function is as follows. Core subunit of the mitochondrial membrane respiratory chain NADH dehydrogenase (Complex I) which catalyzes electron transfer from NADH through the respiratory chain, using ubiquinone as an electron acceptor. Essential for the catalytic activity of complex I. This is NADH-ubiquinone oxidoreductase chain 3 from Peromyscus boylii (Brush deermouse).